The following is a 232-amino-acid chain: Large ribosomal subunit protein uL1 (232 aa).

It belongs to the universal ribosomal protein uL1 family. As to quaternary structure, part of the 50S ribosomal subunit.

Binds directly to 23S rRNA. The L1 stalk is quite mobile in the ribosome, and is involved in E site tRNA release. Functionally, protein L1 is also a translational repressor protein, it controls the translation of the L11 operon by binding to its mRNA. The protein is Large ribosomal subunit protein uL1 of Methylorubrum extorquens (strain CM4 / NCIMB 13688) (Methylobacterium extorquens).